Here is a 432-residue protein sequence, read N- to C-terminus: Glycosyltransferase 6 (432 aa).

At 1–18 (MGKPGGAKTRTAVCLSDG) the chain is on the cytoplasmic side. A helical; Signal-anchor for type II membrane protein transmembrane segment spans residues 19 to 39 (VFFLAGAFMSLTLVWSYFSIF). Topologically, residues 40–432 (SPSFTSLRHD…LPFDYPNEAW (393 aa)) are lumenal. N-linked (GlcNAc...) asparagine glycosylation is present at N315.

It belongs to the glycosyltransferase 34 family.

Its subcellular location is the golgi apparatus membrane. Its function is as follows. Probable glycosyltransferase that may be involved in the biosynthesis of xyloglucan. This chain is Glycosyltransferase 6 (GT6), found in Arabidopsis thaliana (Mouse-ear cress).